A 161-amino-acid chain; its full sequence is Mediator of RNA polymerase II transcription subunit 10 (161 aa).

This sequence belongs to the Mediator complex subunit 10 family. In terms of assembly, component of the Mediator complex.

Its subcellular location is the nucleus. Its function is as follows. Component of the Mediator complex, a coactivator involved in the regulated transcription of nearly all RNA polymerase II-dependent genes. Mediator functions as a bridge to convey information from gene-specific regulatory proteins to the basal RNA polymerase II transcription machinery. Mediator is recruited to promoters by direct interactions with regulatory proteins and serves as a scaffold for the assembly of a functional preinitiation complex with RNA polymerase II and the general transcription factors. This Kluyveromyces lactis (strain ATCC 8585 / CBS 2359 / DSM 70799 / NBRC 1267 / NRRL Y-1140 / WM37) (Yeast) protein is Mediator of RNA polymerase II transcription subunit 10 (NUT2).